The chain runs to 37 residues: Large ribosomal subunit protein bL36 (37 aa).

It belongs to the bacterial ribosomal protein bL36 family.

This is Large ribosomal subunit protein bL36 from Campylobacter jejuni subsp. jejuni serotype O:6 (strain 81116 / NCTC 11828).